The sequence spans 235 residues: MRLAVNIDHIATLRNARNEGEPDPVAAALLAEESGAAGIVCHLREDRRHIRDNDLKGLRRSVKTKLDLEMAMTEEMQRIAIETVPELITLVPEKREELTTEGGFDIERHFKRLALFIEPIRAAGIEVSLFIEPDSRSIDLAAEAGSDLVELHTGSYALKSGEEQTAEFERIRHAAKYAVDRGLKVVAGHGLNYRNIQPFRQIPEIEEVSIGHALIARAAFVGIPEAVREMLDLIG.

Asn6 contacts 3-amino-2-oxopropyl phosphate. Position 8 to 9 (8 to 9) interacts with 1-deoxy-D-xylulose 5-phosphate; it reads DH. Residue Arg17 participates in 3-amino-2-oxopropyl phosphate binding. His42 acts as the Proton acceptor in catalysis. Arg44 and His49 together coordinate 1-deoxy-D-xylulose 5-phosphate. The active-site Proton acceptor is the Glu69. Thr99 is a binding site for 1-deoxy-D-xylulose 5-phosphate. The active-site Proton donor is the His189. 3-amino-2-oxopropyl phosphate contacts are provided by residues Gly190 and 211-212; that span reads GH.

Belongs to the PNP synthase family. In terms of assembly, homooctamer; tetramer of dimers.

The protein localises to the cytoplasm. The catalysed reaction is 3-amino-2-oxopropyl phosphate + 1-deoxy-D-xylulose 5-phosphate = pyridoxine 5'-phosphate + phosphate + 2 H2O + H(+). It participates in cofactor biosynthesis; pyridoxine 5'-phosphate biosynthesis; pyridoxine 5'-phosphate from D-erythrose 4-phosphate: step 5/5. In terms of biological role, catalyzes the complicated ring closure reaction between the two acyclic compounds 1-deoxy-D-xylulose-5-phosphate (DXP) and 3-amino-2-oxopropyl phosphate (1-amino-acetone-3-phosphate or AAP) to form pyridoxine 5'-phosphate (PNP) and inorganic phosphate. The polypeptide is Pyridoxine 5'-phosphate synthase (Chlorobium luteolum (strain DSM 273 / BCRC 81028 / 2530) (Pelodictyon luteolum)).